The primary structure comprises 148 residues: Putative lysozyme C-2 (148 aa).

A signal peptide spans 1-18; sequence MKALLVLGFLLLSASVQA. The C-type lysozyme domain occupies 19 to 148; the sequence is KVFKHCELAR…LSGYIRNCGV (130 aa). Cystine bridges form between C24–C146, C48–C134, C83–C99, and C95–C113. Catalysis depends on residues E53 and D71.

It belongs to the glycosyl hydrolase 22 family. In terms of assembly, monomer.

It is found in the secreted. The enzyme catalyses Hydrolysis of (1-&gt;4)-beta-linkages between N-acetylmuramic acid and N-acetyl-D-glucosamine residues in a peptidoglycan and between N-acetyl-D-glucosamine residues in chitodextrins.. Lysozymes have primarily a bacteriolytic function; those in tissues and body fluids are associated with the monocyte-macrophage system and enhance the activity of immunoagents. In the intestine they may also have a digestive function. The sequence is that of Putative lysozyme C-2 (Lyz2) from Rattus norvegicus (Rat).